The primary structure comprises 315 residues: Cytochrome f (315 aa).

The N-terminal stretch at 1 to 30 (MRTFLKFSTLVSKGVLVLVCSFFLTASSNA) is a signal peptide. Heme-binding residues include tyrosine 31, cysteine 51, cysteine 54, and histidine 55. A helical transmembrane segment spans residues 281 to 300 (IQGLLVFFLFVLLAQVFLVL).

This sequence belongs to the cytochrome f family. As to quaternary structure, the 4 large subunits of the cytochrome b6-f complex are cytochrome b6, subunit IV (17 kDa polypeptide, petD), cytochrome f and the Rieske protein, while the 4 small subunits are PetG, PetL, PetM and PetN. The complex functions as a dimer. Heme serves as cofactor.

It localises to the plastid. Its subcellular location is the chloroplast thylakoid membrane. Component of the cytochrome b6-f complex, which mediates electron transfer between photosystem II (PSII) and photosystem I (PSI), cyclic electron flow around PSI, and state transitions. The sequence is that of Cytochrome f (petA) from Chlorella vulgaris (Green alga).